Reading from the N-terminus, the 233-residue chain is Sugar fermentation stimulation protein homolog (233 aa).

Belongs to the SfsA family.

This chain is Sugar fermentation stimulation protein homolog, found in Saccharophagus degradans (strain 2-40 / ATCC 43961 / DSM 17024).